The chain runs to 36 residues: Allergen Act d 3 (36 aa).

Post-translationally, N-glycosylated.

In Actinidia deliciosa (Kiwi), this protein is Allergen Act d 3.